An 86-amino-acid polypeptide reads, in one-letter code: Protein Vpu (86 aa).

The Extracellular segment spans residues 1–12 (MLELIGRIDYRL). A helical transmembrane segment spans residues 13 to 33 (GVGALIVALIIVIIVWTIAYI). Residues 34-86 (EYRKLVRQRRIDWLVKRIKERAEDSGNESGGDTEELETMVDMGHLRLLDGNDL) are Cytoplasmic-facing. Residues S58 and S62 each carry the phosphoserine; by host CK2 modification.

The protein belongs to the HIV-1 VPU protein family. Homopentamer. Interacts with host CD4 and BRTC; these interactions induce proteasomal degradation of CD4. Interacts with host BST2; this interaction leads to the degradation of host BST2. Interacts with host FBXW11. Interacts with host AP1M1; this interaction plays a role in the mistrafficking and subsequent degradation of host BST2. Interacts with host RANBP2; this interaction allows Vpu to down-regulate host BLM sumoylation. In terms of processing, phosphorylated by host CK2. This phosphorylation is necessary for interaction with human BTRC and degradation of CD4.

Its subcellular location is the host membrane. Its activity is regulated as follows. Ion channel activity is inhibited by hexamethylene amiloride in vitro. In terms of biological role, enhances virion budding, by targeting human CD4 and Tetherin/BST2 to proteasome degradation. Degradation of CD4 prevents any unwanted premature interactions between viral Env and its host receptor CD4 in the endoplasmic reticulum. Degradation of antiretroviral protein Tetherin/BST2 is important for virion budding, as BST2 tethers new viral particles to the host cell membrane. Mechanistically, Vpu bridges either CD4 or BST2 to BTRC, a substrate recognition subunit of the Skp1/Cullin/F-box protein E3 ubiquitin ligase, induces their ubiquitination and subsequent proteasomal degradation. The alteration of the E3 ligase specificity by Vpu seems to promote the degradation of host IKBKB, leading to NF-kappa-B down-regulation and subsequent apoptosis. Acts as a viroporin that forms an oligomeric ion channel in membranes. Modulates the host DNA repair mechanisms to promote degradation of nuclear viral cDNA in cells that are already productively infected in order to suppress immune sensing and proviral hyper-integration (superinfection). Manipulates PML-NBs and modulates SUMOylation of host BLM protein thereby enhancing its DNA-end processing activity toward viral unintegrated linear DNA. Also inhibits RAD52-mediated homologous repair of viral cDNA, preventing the generation of dead-end circular forms of single copies of the long terminal repeat and permitting sustained nucleolytic attack. The chain is Protein Vpu from Homo sapiens (Human).